The following is a 216-amino-acid chain: Thiosulfate dehydrogenase electron acceptor (216 aa).

The first 22 residues, 1-22 (MKSIHWPLAGVAALLLSMQAQA), serve as a signal peptide directing secretion. Cytochrome c domains are found at residues 23 to 108 (ADGQ…EAMP) and 118 to 210 (SEAA…ANVG). Residues cysteine 41, cysteine 44, histidine 45, cysteine 141, cysteine 144, and histidine 145 each coordinate heme c.

In terms of processing, binds 2 heme c groups covalently per subunit.

Acts as an electron acceptor for the thiosulfate dehydrogenase TsdA. The sequence is that of Thiosulfate dehydrogenase electron acceptor (tsdB) from Stutzerimonas stutzeri (strain A1501) (Pseudomonas stutzeri).